Reading from the N-terminus, the 276-residue chain is NAD kinase (276 aa).

Residue Asp-61 is the Proton acceptor of the active site. Residues 61-62, 134-135, Arg-145, Lys-162, Asp-164, Val-172, 175-180, and Gln-234 contribute to the NAD(+) site; these read DG, ND, and TAYSFS.

Belongs to the NAD kinase family. It depends on a divalent metal cation as a cofactor.

Its subcellular location is the cytoplasm. It carries out the reaction NAD(+) + ATP = ADP + NADP(+) + H(+). Involved in the regulation of the intracellular balance of NAD and NADP, and is a key enzyme in the biosynthesis of NADP. Catalyzes specifically the phosphorylation on 2'-hydroxyl of the adenosine moiety of NAD to yield NADP. This chain is NAD kinase, found in Clostridium perfringens (strain ATCC 13124 / DSM 756 / JCM 1290 / NCIMB 6125 / NCTC 8237 / Type A).